Here is a 367-residue protein sequence, read N- to C-terminus: MSLADSVLAINNDLPIRTDSPVHSGKVRSVYWLTDADSRRLITTKGYNVPEDTPLAIMVISDRISAFDCIFHGEGGLKGIPGKGAALNAISNHWFKLFAENGLADSHILDIPHPFVWIVQKARPIKVEAICRQYITGSMWRAYSKGERVFCGITLPEGLEKDQKLPELLITPSTKGILTGIPGVPAQDDVNISRSDIEANYQAFGFEKLADIDLYEKLLKDGFKVISKALADIDQVFVDTKFEFGYVTDKDGNSKLIYMDEVGTPDSSRIWDGAAYRDGKILENSKEGFRQFLLNHFPDPDVLLNKDRMPEREALARDNDLPLEAMMQVSRTYTGVAEKVTGAPIPLPANPKADIIKILKDEYDLIV.

Belongs to the SAICAR synthetase family.

The catalysed reaction is 5-amino-1-(5-phospho-D-ribosyl)imidazole-4-carboxylate + L-aspartate + ATP = (2S)-2-[5-amino-1-(5-phospho-beta-D-ribosyl)imidazole-4-carboxamido]succinate + ADP + phosphate + 2 H(+). Its pathway is purine metabolism; IMP biosynthesis via de novo pathway; 5-amino-1-(5-phospho-D-ribosyl)imidazole-4-carboxamide from 5-amino-1-(5-phospho-D-ribosyl)imidazole-4-carboxylate: step 1/2. The chain is Phosphoribosylaminoimidazole-succinocarboxamide synthase from Shewanella baltica (strain OS223).